A 193-amino-acid polypeptide reads, in one-letter code: Rho-related GTP-binding protein RhoA-C (193 aa).

GTP-binding positions include 12-19 (GDGACGKT), 30-37 (FPEVYVPT), 59-63 (DTAGQ), 117-120 (NKKD), and 160-162 (SAK). (Microbial infection) O-linked (GlcNAc) tyrosine; by Yersinia Afp18 glycosylation occurs at Tyr-34. Residue Cys-190 is modified to Cysteine methyl ester. The S-geranylgeranyl cysteine moiety is linked to residue Cys-190. A propeptide spans 191-193 (LLL) (removed in mature form).

The protein belongs to the small GTPase superfamily. Rho family. (Microbial infection) Glycosylated at Tyr-34 by Yersinia ruckeri toxin Afp18. Mono-O-GlcNAcylation by Afp18 inhibits RhoA activation by guanine nucleotide exchange factors and blocks RhoA signaling.

The protein localises to the cell membrane. Its function is as follows. Regulates a signal transduction pathway linking plasma membrane receptors to the assembly of focal adhesions and actin stress fibers. This Danio rerio (Zebrafish) protein is Rho-related GTP-binding protein RhoA-C.